Here is a 325-residue protein sequence, read N- to C-terminus: Phospho-N-acetylmuramoyl-pentapeptide-transferase (325 aa).

9 consecutive transmembrane segments (helical) span residues 7-27 (LFVLILSFAAAVIMSPLFIPF), 57-77 (IVIVLSIFISALAIGIAITGF), 81-101 (LLLLMVVTLGYGIVGFVDDYL), 122-142 (VIAAIFYIGLLAIGFDTFIAI), 146-166 (TFGFDLGWLYLILIVLMLLGA), 186-206 (IAFGAFAILAWSGGFIDTALF), 227-247 (VFMGDTGSLALGGAIAAIAIL), 252-272 (LMLIIVGGVFVIETLSVIIQV), and 302-322 (VVVTFWLVGMIFAIMGVYIGV).

This sequence belongs to the glycosyltransferase 4 family. MraY subfamily. It depends on Mg(2+) as a cofactor.

The protein resides in the cell membrane. The catalysed reaction is UDP-N-acetyl-alpha-D-muramoyl-L-alanyl-gamma-D-glutamyl-meso-2,6-diaminopimeloyl-D-alanyl-D-alanine + di-trans,octa-cis-undecaprenyl phosphate = di-trans,octa-cis-undecaprenyl diphospho-N-acetyl-alpha-D-muramoyl-L-alanyl-D-glutamyl-meso-2,6-diaminopimeloyl-D-alanyl-D-alanine + UMP. It functions in the pathway cell wall biogenesis; peptidoglycan biosynthesis. Functionally, catalyzes the initial step of the lipid cycle reactions in the biosynthesis of the cell wall peptidoglycan: transfers peptidoglycan precursor phospho-MurNAc-pentapeptide from UDP-MurNAc-pentapeptide onto the lipid carrier undecaprenyl phosphate, yielding undecaprenyl-pyrophosphoryl-MurNAc-pentapeptide, known as lipid I. The sequence is that of Phospho-N-acetylmuramoyl-pentapeptide-transferase from Shouchella clausii (strain KSM-K16) (Alkalihalobacillus clausii).